Here is a 1499-residue protein sequence, read N- to C-terminus: Condensin complex subunit 1 (1499 aa).

2 disordered regions span residues 1–43 (MPRK…DGLS) and 1421–1499 (ITKN…MLDD). Low complexity predominate over residues 1432 to 1446 (PTTMSGSSRTTSRAA). Acidic residues-rich tracts occupy residues 1458–1467 (SDEDDSDSDD) and 1486–1499 (ADDD…MLDD).

Belongs to the CND1 (condensin subunit 1) family. Component of the condensin I complex, which contains the mix-1/SMC2 and smc-4/SMC4 heterodimer, and three non SMC subunits that probably regulate the complex: dpy-26, capg-1 and dpy-28. Within the complex, interacts with dpy-26 and smc-4. Component of the dosage compensation complex, which consist of the condensin I like components mix-1/SMC2 and dpy-27/SMC4, and the three non SMC subunits dpy-26, capg-1 and dpy-28. Within the complex, interacts with mix-1, dpy-27, dpy-26 and capg-1. Interacts with smcl-1. Post-translationally, sumoylated. Sumoylated in the context of the dosage compensation complex but not in the condensin I complex. Sumoylation is important for assembly of the dosage compensation complex and its robust binding to the X chromosome. In terms of tissue distribution, expressed in somatic and germline tissues (at protein level).

It is found in the nucleus. The protein localises to the chromosome. Required for both chromosome condensation and segregation during mitosis and meiosis and X-chromosome dosage compensation depending on its binding partners. Regulatory subunit of the condensin I complex, a complex required for conversion of interphase chromatin into mitotic-like condense chromosomes. The condensin I complex probably introduces positive supercoils into relaxed DNA in the presence of type I topoisomerases and converts nicked DNA into positive knotted forms in the presence of type II topoisomerases. The condensin I complex function is required for proper chromosome segregation in mitosis and meiosis. As a member of the condensin I complex, further controls the crossover number and distribution in meiosis by restricting double strand break formation, possibly by influencing higher-order chromosome structure. Plays a role in robust cytokinesis upon presence of chromatin obstructions. Also a member of the condensin I-like dosage compensation complex that associates specifically with hermaphrodite X chromosomes to reduce their gene transcription during interphase, possibly through chromatin reorganization. In Caenorhabditis elegans, this protein is Condensin complex subunit 1.